The chain runs to 255 residues: Indole-3-glycerol phosphate synthase (255 aa).

The protein belongs to the TrpC family.

The catalysed reaction is 1-(2-carboxyphenylamino)-1-deoxy-D-ribulose 5-phosphate + H(+) = (1S,2R)-1-C-(indol-3-yl)glycerol 3-phosphate + CO2 + H2O. Its pathway is amino-acid biosynthesis; L-tryptophan biosynthesis; L-tryptophan from chorismate: step 4/5. This Priestia megaterium (strain ATCC 12872 / QMB1551) (Bacillus megaterium) protein is Indole-3-glycerol phosphate synthase (trpC).